The following is an 86-amino-acid chain: Protein Tat (86 aa).

Residues 1-21 are disordered; that stretch reads MDPVDPNLEPWNHPGSQPKTA. An interaction with human CREBBP region spans residues 1-24; that stretch reads MDPVDPNLEPWNHPGSQPKTACNR. The tract at residues 1 to 48 is transactivation; that stretch reads MDPVDPNLEPWNHPGSQPKTACNRCHCKKCCYHCQVCFITKGLGISYG. Residues cysteine 22, cysteine 25, and cysteine 27 each coordinate Zn(2+). Residues 22 to 37 are cysteine-rich; sequence CNRCHCKKCCYHCQVC. The residue at position 28 (lysine 28) is an N6-acetyllysine; by host PCAF. Residues cysteine 30, histidine 33, cysteine 34, and cysteine 37 each contribute to the Zn(2+) site. The tract at residues 38-48 is core; that stretch reads FITKGLGISYG. Residues 47–86 are disordered; it reads YGRKKRRQRRRPSQGGQTHQDPIPKQPSSQPRGNPTGPKE. Residues 48–58 are compositionally biased toward basic residues; sequence GRKKRRQRRRP. The short motif at 49–57 is the Nuclear localization signal, RNA-binding (TAR), and protein transduction element; it reads RKKRRQRRR. The segment at 49-86 is interaction with the host capping enzyme RNGTT; that stretch reads RKKRRQRRRPSQGGQTHQDPIPKQPSSQPRGNPTGPKE. N6-acetyllysine; by host EP300 and GCN5L2 is present on residues lysine 50 and lysine 51. Asymmetric dimethylarginine; by host PRMT6 is present on residues arginine 52 and arginine 53. The segment covering 60–79 has biased composition (polar residues); the sequence is QGGQTHQDPIPKQPSSQPRG. Lysine 71 is covalently cross-linked (Glycyl lysine isopeptide (Lys-Gly) (interchain with G-Cter in ubiquitin)).

The protein belongs to the lentiviruses Tat family. As to quaternary structure, interacts with host CCNT1. Associates with the P-TEFb complex composed at least of Tat, P-TEFb (CDK9 and CCNT1), TAR RNA, RNA Pol II. Recruits the HATs CREBBP, TAF1/TFIID, EP300, PCAF and GCN5L2. Interacts with host KAT5/Tip60; this interaction targets the latter to degradation. Interacts with the host deacetylase SIRT1. Interacts with host capping enzyme RNGTT; this interaction stimulates RNGTT. Binds to host KDR, and to the host integrins ITGAV/ITGB3 and ITGA5/ITGB1. Interacts with host KPNB1/importin beta-1 without previous binding to KPNA1/importin alpha-1. Interacts with EIF2AK2. Interacts with host nucleosome assembly protein NAP1L1; this interaction may be required for the transport of Tat within the nucleus, since the two proteins interact at the nuclear rim. Interacts with host C1QBP/SF2P32; this interaction involves lysine-acetylated Tat. Interacts with the host chemokine receptors CCR2, CCR3 and CXCR4. Interacts with host DPP4/CD26; this interaction may trigger an anti-proliferative effect. Interacts with host LDLR. Interacts with the host extracellular matrix metalloproteinase MMP1. Interacts with host PRMT6; this interaction mediates Tat's methylation. Interacts with, and is ubiquitinated by MDM2/Hdm2. Interacts with host PSMC3 and HTATIP2. Interacts with STAB1; this interaction may overcome SATB1-mediated repression of IL2 and IL2RA (interleukin) in T cells by binding to the same domain than HDAC1. Interacts (when acetylated) with human CDK13, thereby increasing HIV-1 mRNA splicing and promoting the production of the doubly spliced HIV-1 protein Nef. Interacts with host TBP; this interaction modulates the activity of transcriptional pre-initiation complex. Interacts with host RELA. Interacts with host PLSCR1; this interaction negatively regulates Tat transactivation activity by altering its subcellular distribution. Post-translationally, asymmetrical arginine methylation by host PRMT6 seems to diminish the transactivation capacity of Tat and affects the interaction with host CCNT1. Acetylation by EP300, CREBBP, GCN5L2/GCN5 and PCAF regulates the transactivation activity of Tat. EP300-mediated acetylation of Lys-50 promotes dissociation of Tat from the TAR RNA through the competitive binding to PCAF's bromodomain. In addition, the non-acetylated Tat's N-terminus can also interact with PCAF. PCAF-mediated acetylation of Lys-28 enhances Tat's binding to CCNT1. Lys-50 is deacetylated by SIRT1. In terms of processing, polyubiquitination by host MDM2 does not target Tat to degradation, but activates its transactivation function and fosters interaction with CCNT1 and TAR RNA. Post-translationally, phosphorylated by EIF2AK2 on serine and threonine residues adjacent to the basic region important for TAR RNA binding and function. Phosphorylation of Tat by EIF2AK2 is dependent on the prior activation of EIF2AK2 by dsRNA.

The protein localises to the host nucleus. Its subcellular location is the host nucleolus. It localises to the host cytoplasm. It is found in the secreted. In terms of biological role, transcriptional activator that increases RNA Pol II processivity, thereby increasing the level of full-length viral transcripts. Recognizes a hairpin structure at the 5'-LTR of the nascent viral mRNAs referred to as the transactivation responsive RNA element (TAR) and recruits the cyclin T1-CDK9 complex (P-TEFb complex) that will in turn hyperphosphorylate the RNA polymerase II to allow efficient elongation. The CDK9 component of P-TEFb and other Tat-activated kinases hyperphosphorylate the C-terminus of RNA Pol II that becomes stabilized and much more processive. Other factors such as HTATSF1/Tat-SF1, SUPT5H/SPT5, and HTATIP2 are also important for Tat's function. Besides its effect on RNA Pol II processivity, Tat induces chromatin remodeling of proviral genes by recruiting the histone acetyltransferases (HATs) CREBBP, EP300 and PCAF to the chromatin. This also contributes to the increase in proviral transcription rate, especially when the provirus integrates in transcriptionally silent region of the host genome. To ensure maximal activation of the LTR, Tat mediates nuclear translocation of NF-kappa-B by interacting with host RELA. Through its interaction with host TBP, Tat may also modulate transcription initiation. Tat can reactivate a latently infected cell by penetrating in it and transactivating its LTR promoter. In the cytoplasm, Tat is thought to act as a translational activator of HIV-1 mRNAs. Functionally, extracellular circulating Tat can be endocytosed by surrounding uninfected cells via the binding to several surface receptors such as CD26, CXCR4, heparan sulfate proteoglycans (HSPG) or LDLR. Neurons are rarely infected, but they internalize Tat via their LDLR. Through its interaction with nuclear HATs, Tat is potentially able to control the acetylation-dependent cellular gene expression. Modulates the expression of many cellular genes involved in cell survival, proliferation or in coding for cytokines or cytokine receptors. Tat plays a role in T-cell and neurons apoptosis. Tat induced neurotoxicity and apoptosis probably contribute to neuroAIDS. Circulating Tat also acts as a chemokine-like and/or growth factor-like molecule that binds to specific receptors on the surface of the cells, affecting many cellular pathways. In the vascular system, Tat binds to ITGAV/ITGB3 and ITGA5/ITGB1 integrins dimers at the surface of endothelial cells and competes with bFGF for heparin-binding sites, leading to an excess of soluble bFGF. The polypeptide is Protein Tat (Homo sapiens (Human)).